The chain runs to 563 residues: Arginine--tRNA ligase (563 aa).

The 'HIGH' region motif lies at 123 to 133 (PNIAKDMHVGH).

The protein belongs to the class-I aminoacyl-tRNA synthetase family. In terms of assembly, monomer.

The protein localises to the cytoplasm. The catalysed reaction is tRNA(Arg) + L-arginine + ATP = L-arginyl-tRNA(Arg) + AMP + diphosphate. The protein is Arginine--tRNA ligase of Chlamydia trachomatis serovar A (strain ATCC VR-571B / DSM 19440 / HAR-13).